The following is a 718-amino-acid chain: MQRRTRGASSLRLARCLTPANLIRGDNAGVPERRIFGGCLLPTPEGLLSAAVGALRQRSDDAQPAFLTCTDRSVRLAARQHNTVPESLIVDGLASDPHYEYIRHYASAATQALGEVELPGGQLSRAILTQYWKYLQTVVPSGLDVPEDPVGDCDPSLHVLLRPTLAPKLLARTPFKSGAVAAKYAATVAGLRDALHRIQQYMFFMRPADPSRPSTDTALRLNELLAYVSVLYRWASWMLWTTDKHVCHRLSPSNRRFLPLGGSPEAPAETFARHLDRGPSGTTGSMQCMALRAAVSDVLGHLTRLANLWQTGKRSGGTYGTVDTVVSTVEVLSIVHHHAQYIINATLTGYGVWATDSLNNEYLRAAVDSQERFCRTTAPLFPTMTAPSWARMELSIKAWFGAALAADLLRNGAPSLHYESILRLVASRRTTWSAGPPPDDMASGPGGHRAGGGTCREKIQRARRDNEPPPLPRPRLHSTPASTRRFRRRRADGAGPPLPDANDPVAEPPAAATQPATYYTHMGEVPPRLPARNVAGPDRRPPAATCPLLVRRASLGSLDRPRVWGPAPEGEPDQMEATYLTADDDDDDARRKATHAASARERHAPYEDDESIYETVSEDGGRVYEEIPWMRVYENVCVNTANAAPASPYIEAENPLYDWGGSALFSPPGRTGPPPPPLSPSPVLARHRANALTNDGPTNVAALSALLTKLKREGRRSR.

2 disordered regions span residues 433–510 and 581–611; these read SAGP…EPPA and TADD…DDES. Positions 444–454 are enriched in gly residues; it reads GPGGHRAGGGT. Basic and acidic residues predominate over residues 455 to 467; sequence CREKIQRARRDNE.

It belongs to the herpesviridae HHV-1 VP11/12 protein family. Interacts with VP16. Interacts with host LCK, PIK3R1, SHC1 AND GRB2; these interactions promote the activation of the PI3K/AKT pathway. Interacts with host YWHAB. Interacts with ICP0; this interaction targets UL46 for degradation by the proteasome. Interacts (via N-terminus) with host TMEM173. Interacts (via C-terminus) with host TBK1. Interacts with host DOK2. In terms of processing, phosphorylated by host LCK. The phosphorylation seems to be lymphocyte-specific.

Its subcellular location is the virion tegument. It localises to the host cytoplasm. It is found in the host cell membrane. Plays a role in the activation of the host PI3K/AKT pathway to promote cell survival. Interacts with and activates host LCK and thereby recruits downstream partners SHC1, GRB2 and PI3KR1 in order to activate the PI3K pathway by phosphorylating host AKT on its activating residues. This mechanism is inhibited by the viral protein US3 that instead promotes incorporation of UL46 into virions. Plays a role in the inhibition of TMEM173/STING-mediated type I interferon production. Interacts with host DOK2 and induces its degradation. This immune evasion mechanism to inactivate T-cells may play an important role during pathogenesis. The polypeptide is Tegument protein UL46 (Homo sapiens (Human)).